The primary structure comprises 202 residues: Inosine triphosphate pyrophosphatase (202 aa).

ITP is bound at residue 8–13; that stretch reads TGNANK. Glutamate 55 contacts Mg(2+). ITP-binding positions include lysine 67, 83–84, lysine 100, 159–162, lysine 182, and 187–188; these read DT, FGWD, and HR.

This sequence belongs to the HAM1 NTPase family. As to quaternary structure, homodimer. The cofactor is Mg(2+). Mn(2+) is required as a cofactor.

The protein localises to the cytoplasm. The protein resides in the nucleus. It carries out the reaction ITP + H2O = IMP + diphosphate + H(+). It catalyses the reaction dITP + H2O = dIMP + diphosphate + H(+). The enzyme catalyses XTP + H2O = XMP + diphosphate + H(+). Its function is as follows. Pyrophosphatase that hydrolyzes non-canonical purine nucleotides such as inosine triphosphate (ITP), deoxyinosine triphosphate (dITP) or xanthosine 5'-triphosphate (XTP) to their respective monophosphate derivatives. The enzyme does not distinguish between the deoxy- and ribose forms. Probably excludes non-canonical purines from RNA and DNA precursor pools, thus preventing their incorporation into RNA and DNA and avoiding chromosomal lesions. The polypeptide is Inosine triphosphate pyrophosphatase (Candida albicans (strain SC5314 / ATCC MYA-2876) (Yeast)).